A 461-amino-acid polypeptide reads, in one-letter code: Photosystem II CP43 reaction center protein (461 aa).

A propeptide spanning residues 1-2 (ME) is cleaved from the precursor. An N-acetylthreonine modification is found at threonine 3. Position 3 is a phosphothreonine (threonine 3). 5 consecutive transmembrane segments (helical) span residues 57 to 81 (LFEV…PHLA), 122 to 143 (LIGP…KDKN), 166 to 188 (KAMY…RVIT), 243 to 263 (KPWA…LSYS), and 279 to 300 (WFNN…ASQS). Glutamate 355 contributes to the [CaMn4O5] cluster binding site. The chain crosses the membrane as a helical span at residues 435 to 459 (RARAAAAGFEKGIDRDNEPVLSMKP).

It belongs to the PsbB/PsbC family. PsbC subfamily. PSII is composed of 1 copy each of membrane proteins PsbA, PsbB, PsbC, PsbD, PsbE, PsbF, PsbH, PsbI, PsbJ, PsbK, PsbL, PsbM, PsbT, PsbX, PsbY, PsbZ, Psb30/Ycf12, at least 3 peripheral proteins of the oxygen-evolving complex and a large number of cofactors. It forms dimeric complexes. The cofactor is Binds multiple chlorophylls and provides some of the ligands for the Ca-4Mn-5O cluster of the oxygen-evolving complex. It may also provide a ligand for a Cl- that is required for oxygen evolution. PSII binds additional chlorophylls, carotenoids and specific lipids..

The protein localises to the plastid. It localises to the chloroplast thylakoid membrane. One of the components of the core complex of photosystem II (PSII). It binds chlorophyll and helps catalyze the primary light-induced photochemical processes of PSII. PSII is a light-driven water:plastoquinone oxidoreductase, using light energy to abstract electrons from H(2)O, generating O(2) and a proton gradient subsequently used for ATP formation. The polypeptide is Photosystem II CP43 reaction center protein (Tupiella akineta (Green alga)).